Here is a 173-residue protein sequence, read N- to C-terminus: Shikimate kinase 1 (173 aa).

14 to 19 (GAGKST) contacts ATP. Ser-18 contacts Mg(2+). Residues Asp-36, Arg-60, and Gly-82 each coordinate substrate. ATP is bound at residue Arg-120. Arg-140 serves as a coordination point for substrate. Residue Gln-157 participates in ATP binding.

The protein belongs to the shikimate kinase family. Monomer. It depends on Mg(2+) as a cofactor.

The protein localises to the cytoplasm. The catalysed reaction is shikimate + ATP = 3-phosphoshikimate + ADP + H(+). The protein operates within metabolic intermediate biosynthesis; chorismate biosynthesis; chorismate from D-erythrose 4-phosphate and phosphoenolpyruvate: step 5/7. Functionally, catalyzes the specific phosphorylation of the 3-hydroxyl group of shikimic acid using ATP as a cosubstrate. This is Shikimate kinase 1 from Citrobacter koseri (strain ATCC BAA-895 / CDC 4225-83 / SGSC4696).